The sequence spans 183 residues: Oligoribonuclease (183 aa).

Positions 8-171 constitute an Exonuclease domain; the sequence is LIWLDLEMTG…QDIRDSIEEL (164 aa). Tyrosine 129 is a catalytic residue.

This sequence belongs to the oligoribonuclease family.

The protein localises to the cytoplasm. 3'-to-5' exoribonuclease specific for small oligoribonucleotides. The protein is Oligoribonuclease of Coxiella burnetii (strain RSA 493 / Nine Mile phase I).